The chain runs to 628 residues: Eukaryotic peptide chain release factor GTP-binding subunit ERF3B (628 aa).

Over residues 1 to 10 the composition is skewed to low complexity; the sequence is MDSGSSSSDS. Disordered regions lie at residues 1 to 44, 71 to 124, and 146 to 191; these read MDSG…REPL, SFLR…LEGS, and LEES…KSKS. The 225-residue stretch at 201–425 folds into the tr-type G domain; sequence KEHVNVVFIG…YLDNLPNFNR (225 aa). Residues 210–217 are G1; sequence GHVDAGKS. 213 to 218 is a binding site for GTP; sequence DAGKST. Residues 266-270 form a G2 region; sequence GKTVE. The interval 287–290 is G3; that stretch reads DAPG. Residues 349-352 and 391-393 each bind GTP; these read NKMD and SGL. Residues 349 to 352 are G4; sequence NKMD. Residues 391–393 are G5; sequence SGL.

This sequence belongs to the TRAFAC class translation factor GTPase superfamily. Classic translation factor GTPase family. ERF3 subfamily. In terms of assembly, component of the eRF1-eRF3-GTP ternary complex, composed of ETF1/ERF1 and ERF3 (GSPT1/ERF3A or GSPT2/ERF3B) and GTP. Component of the transient SURF (SMG1-UPF1-eRF1-eRF3) complex. Interacts with UPF1 and PABPC1.

The protein localises to the cytoplasm. It carries out the reaction GTP + H2O = GDP + phosphate + H(+). GTPase component of the eRF1-eRF3-GTP ternary complex, a ternary complex that mediates translation termination in response to the termination codons UAA, UAG and UGA. GSPT2/ERF3B mediates ETF1/ERF1 delivery to stop codons: The eRF1-eRF3-GTP complex binds to a stop codon in the ribosomal A-site. GTP hydrolysis by GSPT2/ERF3B induces a conformational change that leads to its dissociation, permitting ETF1/ERF1 to accommodate fully in the A-site. Component of the transient SURF complex which recruits UPF1 to stalled ribosomes in the context of nonsense-mediated decay (NMD) of mRNAs containing premature stop codons. The chain is Eukaryotic peptide chain release factor GTP-binding subunit ERF3B (GSPT2) from Pongo abelii (Sumatran orangutan).